We begin with the raw amino-acid sequence, 156 residues long: Ribonuclease 1B pancreatic (156 aa).

The N-terminal stretch at methionine 1–glycine 28 is a signal peptide. Substrate contacts are provided by lysine 35 and arginine 38. Residue histidine 40 is the Proton acceptor of the active site. 4 disulfides stabilise this stretch: cysteine 54/cysteine 112, cysteine 68/cysteine 123, cysteine 86/cysteine 138, and cysteine 93/cysteine 100. N-linked (GlcNAc...) asparagine glycosylation is present at asparagine 62. Residues lysine 69–threonine 73, lysine 94, and arginine 113 contribute to the substrate site. Asparagine 116 is a glycosylation site (N-linked (GlcNAc...) asparagine). The active-site Proton donor is the histidine 147.

Belongs to the pancreatic ribonuclease family. In terms of assembly, monomer.

The protein localises to the secreted. It catalyses the reaction an [RNA] containing cytidine + H2O = an [RNA]-3'-cytidine-3'-phosphate + a 5'-hydroxy-ribonucleotide-3'-[RNA].. It carries out the reaction an [RNA] containing uridine + H2O = an [RNA]-3'-uridine-3'-phosphate + a 5'-hydroxy-ribonucleotide-3'-[RNA].. Its function is as follows. Endonuclease that catalyzes the cleavage of RNA on the 3' side of pyrimidine nucleotides. Compared to RNASE1 it has lost activity towards dsRNA. The chain is Ribonuclease 1B pancreatic (RNASE1B) from Pygathrix nemaeus (Red-shanked douc langur).